A 206-amino-acid polypeptide reads, in one-letter code: Large ribosomal subunit protein uL3 (206 aa).

Residues 116 to 149 form a disordered region; it reads GFQGAIKRHNQSRGPMSHGSRYHRRPGSMGPVAP.

Belongs to the universal ribosomal protein uL3 family. Part of the 50S ribosomal subunit. Forms a cluster with proteins L14 and L19.

Its function is as follows. One of the primary rRNA binding proteins, it binds directly near the 3'-end of the 23S rRNA, where it nucleates assembly of the 50S subunit. In Shouchella clausii (strain KSM-K16) (Alkalihalobacillus clausii), this protein is Large ribosomal subunit protein uL3.